Reading from the N-terminus, the 684-residue chain is Probable phosphoenolpyruvate synthase (684 aa).

H424 acts as the Tele-phosphohistidine intermediate in catalysis. The substrate site is built by R517, R564, and E661. E661 is a Mg(2+) binding site.

It belongs to the PEP-utilizing enzyme family. It depends on Mg(2+) as a cofactor.

The enzyme catalyses pyruvate + ATP + H2O = phosphoenolpyruvate + AMP + phosphate + 2 H(+). Its pathway is carbohydrate biosynthesis; gluconeogenesis. Functionally, catalyzes the phosphorylation of pyruvate to phosphoenolpyruvate. In Methanothermobacter thermautotrophicus (strain ATCC 29096 / DSM 1053 / JCM 10044 / NBRC 100330 / Delta H) (Methanobacterium thermoautotrophicum), this protein is Probable phosphoenolpyruvate synthase (ppsA).